The primary structure comprises 35 residues: Beta-amanitin proprotein (35 aa).

The propeptide occupies 1–10 (MSDINATRLP). A cross-link (cyclopeptide (Ile-Pro)) is located at residues 11-18 (IWGIGCDP). Positions 12–16 (WGIGC) form a cross-link, 2'-cysteinyl-6'-hydroxytryptophan sulfoxide (Trp-Cys). The propeptide occupies 19–35 (CVGDDVTALLTRGEALC).

It belongs to the MSDIN fungal toxin family. In terms of processing, processed by the macrocyclase-peptidase enzyme POPB to yield a toxic cyclic octapeptide. POPB first removes 10 residues from the N-terminus. Conformational trapping of the remaining peptide forces the enzyme to release this intermediate rather than proceed to macrocyclization. The enzyme rebinds the remaining peptide in a different conformation and catalyzes macrocyclization of the N-terminal 8 residues. Expressed in basidiocarps.

In terms of biological role, toxin belonging to the bicyclic octapeptides amatoxins that acts by binding non-competitively to RNA polymerase II and greatly slowing the elongation of transcripts from target promoters. The chain is Beta-amanitin proprotein from Amanita exitialis (Guangzhou destroying angel).